A 154-amino-acid chain; its full sequence is Putative pre-16S rRNA nuclease (154 aa).

It belongs to the YqgF nuclease family.

Its subcellular location is the cytoplasm. Functionally, could be a nuclease involved in processing of the 5'-end of pre-16S rRNA. The chain is Putative pre-16S rRNA nuclease from Rickettsia felis (strain ATCC VR-1525 / URRWXCal2) (Rickettsia azadi).